Here is a 173-residue protein sequence, read N- to C-terminus: Myosin light chain 5 (173 aa).

Residues 1–20 are disordered; sequence MASRKTKKKEGGALRAQRAS. EF-hand domains are found at residues 30–65, 100–135, and 136–171; these read TQIQEFKEAFTLMDQNRDGFIDKEDLKDTYASLGKT, DAEETILNAFKMLDPDGKGKINKEYIKRLLMSQADK, and MTAEEVDQMFQFASIDVAGNLDYKALSYVITHGEEK. Residues aspartate 43, asparagine 45, aspartate 47, and aspartate 54 each contribute to the Ca(2+) site.

Myosin is a hexamer of 2 heavy chains and 4 light chains. As to expression, expressed in fetal skeletal muscle and retina.

In Homo sapiens (Human), this protein is Myosin light chain 5 (MYL5).